A 335-amino-acid chain; its full sequence is NADH-quinone oxidoreductase subunit H (335 aa).

8 helical membrane passes run 11-31, 81-101, 114-134, 154-174, 187-207, 238-258, 270-290, and 307-327; these read VILTVIKAIVILLAVVVAGAL, VIFTLAPVVAMSALLIAFAII, IGLLFFFAMAGLSVYAVLFAG, VSYEVFMGLALMGIVVQVGSF, LWFIIPQFFGFCTFFIAGVAV, FFVGEYIGIILISALLVTLFF, QLSFVWFALKTAFFILLFILL, and WKFCLPLTLINLLVTAAIVLW.

The protein belongs to the complex I subunit 1 family. In terms of assembly, NDH-1 is composed of 13 different subunits. Subunits NuoA, H, J, K, L, M, N constitute the membrane sector of the complex.

It localises to the cell inner membrane. The enzyme catalyses a quinone + NADH + 5 H(+)(in) = a quinol + NAD(+) + 4 H(+)(out). NDH-1 shuttles electrons from NADH, via FMN and iron-sulfur (Fe-S) centers, to quinones in the respiratory chain. The immediate electron acceptor for the enzyme in this species is believed to be ubiquinone. Couples the redox reaction to proton translocation (for every two electrons transferred, four hydrogen ions are translocated across the cytoplasmic membrane), and thus conserves the redox energy in a proton gradient. This subunit may bind ubiquinone. This Pseudomonas fluorescens (strain Pf0-1) protein is NADH-quinone oxidoreductase subunit H.